A 301-amino-acid polypeptide reads, in one-letter code: Glycine--tRNA ligase alpha subunit (301 aa).

It belongs to the class-II aminoacyl-tRNA synthetase family. In terms of assembly, tetramer of two alpha and two beta subunits.

Its subcellular location is the cytoplasm. The catalysed reaction is tRNA(Gly) + glycine + ATP = glycyl-tRNA(Gly) + AMP + diphosphate. The chain is Glycine--tRNA ligase alpha subunit from Shewanella baltica (strain OS223).